The primary structure comprises 527 residues: Peptide chain release factor 3 (527 aa).

Positions 10 to 278 (DRRRTFAIIS…TFVENAPAPL (269 aa)) constitute a tr-type G domain. Residues 19–26 (SHPDAGKT), 87–91 (DTPGH), and 141–144 (NKLD) each bind GTP.

This sequence belongs to the TRAFAC class translation factor GTPase superfamily. Classic translation factor GTPase family. PrfC subfamily.

The protein localises to the cytoplasm. In terms of biological role, increases the formation of ribosomal termination complexes and stimulates activities of RF-1 and RF-2. It binds guanine nucleotides and has strong preference for UGA stop codons. It may interact directly with the ribosome. The stimulation of RF-1 and RF-2 is significantly reduced by GTP and GDP, but not by GMP. This chain is Peptide chain release factor 3, found in Geobacter metallireducens (strain ATCC 53774 / DSM 7210 / GS-15).